A 158-amino-acid polypeptide reads, in one-letter code: Putative peptidoglycan-binding-like protein (158 aa).

The first 24 residues, 1-24, serve as a signal peptide directing secretion; sequence MRSPKVKFLTIFTFCIFITKMSFA.

It belongs to the IagB/IpgF/P19 family.

The protein resides in the periplasm. In Escherichia coli (strain K12), this protein is Putative peptidoglycan-binding-like protein (pbl).